Here is a 392-residue protein sequence, read N- to C-terminus: Cyclic AMP receptor 1 (392 aa).

Topologically, residues M1–S13 are extracellular. N-linked (GlcNAc...) asparagine glycosylation is present at N10. A helical membrane pass occupies residues L14–I33. The Cytoplasmic portion of the chain corresponds to G34–K47. Residues V48–L68 form a helical membrane-spanning segment. At T69–A83 the chain is on the extracellular side. A helical membrane pass occupies residues I84–V109. Topologically, residues K110–K120 are cytoplasmic. A helical membrane pass occupies residues Y121–A139. Over K140 to G162 the chain is Extracellular. Residues L163–L181 form a helical membrane-spanning segment. At T182–Q205 the chain is on the cytoplasmic side. The helical transmembrane segment at F206 to V224 threads the bilayer. At N225–P235 the chain is on the extracellular side. The chain crosses the membrane as a helical span at residues P236–N260. Topologically, residues N261 to N392 are cytoplasmic. Disordered regions lie at residues N292–S324 and V339–N392. A compositionally biased stretch (polar residues) spans P298–K310. S299, S302, S303, S304, S308, S360, S361, S362, S363, S364, S366, S367, and S368 each carry phosphoserine. Over residues N340–S367 the composition is skewed to low complexity. Residues V375–N392 are compositionally biased toward polar residues.

It belongs to the G-protein coupled receptor 5 family. C-terminal Ser or Thr residues may be phosphorylated.

The protein resides in the membrane. Receptor for cAMP. Coordinates the aggregation of individual cells into a multicellular organism and regulates the expression of a large number of developmentally regulated genes. The activity of this receptor is mediated by G proteins. The polypeptide is Cyclic AMP receptor 1 (carA-1) (Dictyostelium discoideum (Social amoeba)).